The chain runs to 159 residues: Major latex protein 149 (159 aa).

It belongs to the MLP family. In terms of tissue distribution, laticifer.

It localises to the vacuole. The protein resides in the cytoplasmic vesicle. In terms of biological role, not known; MLPs constitute up to 50% of the soluble latex protein. The polypeptide is Major latex protein 149 (MLP149) (Papaver somniferum (Opium poppy)).